We begin with the raw amino-acid sequence, 211 residues long: Small ribosomal subunit protein uS3 (211 aa).

Residues 38-106 (LRKFIKKAFY…NIELNIIEVK (69 aa)) enclose the KH type-2 domain.

The protein belongs to the universal ribosomal protein uS3 family. As to quaternary structure, part of the 30S ribosomal subunit. Forms a tight complex with proteins S10 and S14.

Its function is as follows. Binds the lower part of the 30S subunit head. Binds mRNA in the 70S ribosome, positioning it for translation. The chain is Small ribosomal subunit protein uS3 from Ehrlichia chaffeensis (strain ATCC CRL-10679 / Arkansas).